The chain runs to 101 residues: Apolipoprotein C-II (101 aa).

Residues Met-1 to Gly-22 form the signal peptide. The interval Thr-66–Met-74 is lipid binding. Residues Ser-78–Asp-101 are lipoprotein lipase cofactor.

Belongs to the apolipoprotein C2 family. Post-translationally, proapolipoprotein C-II is synthesized as a sialic acid containing glycoprotein which is subsequently desialylated prior to its proteolytic processing. Proapolipoprotein C-II, the major form found in plasma undergoes proteolytic cleavage of its N-terminal hexapeptide to generate apolipoprotein C-II, which occurs as the minor form in plasma.

The protein localises to the secreted. Component of chylomicrons, very low-density lipoproteins (VLDL), low-density lipoproteins (LDL), and high-density lipoproteins (HDL) in plasma. Plays an important role in lipoprotein metabolism as an activator of lipoprotein lipase. Both proapolipoprotein C-II and apolipoprotein C-II can activate lipoprotein lipase. The sequence is that of Apolipoprotein C-II (APOC2) from Tapirus terrestris (Lowland tapir).